Consider the following 89-residue polypeptide: Small ribosomal subunit protein uS19 (89 aa).

This sequence belongs to the universal ribosomal protein uS19 family.

In terms of biological role, protein S19 forms a complex with S13 that binds strongly to the 16S ribosomal RNA. The chain is Small ribosomal subunit protein uS19 from Xylella fastidiosa (strain 9a5c).